The primary structure comprises 306 residues: Ciliary microtubule inner protein 2B (306 aa).

The interval 61–92 is disordered; that stretch reads QSNPFPPPRDHSFDGGSQELGGRRQHPGDPNL.

Belongs to the CIMIP2 family. As to expression, expressed in airway epithelial cells.

It is found in the cytoplasm. The protein resides in the cytoskeleton. The protein localises to the cilium axoneme. Functionally, microtubule inner protein (MIP) part of the dynein-decorated doublet microtubules (DMTs) in cilia axoneme, which is required for motile cilia beating. This chain is Ciliary microtubule inner protein 2B (cimip2b), found in Xenopus tropicalis (Western clawed frog).